The sequence spans 2238 residues: Golgin subfamily A member 4 (2238 aa).

Residues 1–90 form a disordered region; sequence MFKKLKQKIS…QTFAQKLQLR (90 aa). Ser10 is modified (phosphoserine). Low complexity predominate over residues 12 to 41; the sequence is EQQQLQQALAPAQASSSSSTPTRTRSRTSS. At Thr39 the chain carries Phosphothreonine. Ser41 carries the post-translational modification Phosphoserine. 2 stretches are compositionally biased toward polar residues: residues 52–62 and 73–85; these read NRENASTQATK and SPSQ…TFAQ. A phosphoserine mark is found at Ser93 and Ser100. 3 disordered regions span residues 132 to 154, 1695 to 1744, and 1770 to 1789; these read AAAF…NSDG, LKER…SQDC, and LEQG…HRAL. The interaction with MACF1 stretch occupies residues 154–224; sequence GLSREQLLQR…EELQMDQQAK (71 aa). Positions 156 to 2161 form a coiled coil; that stretch reads SREQLLQRLR…RYEKNACAAT (2006 aa). The span at 1695-1711 shows a compositional bias: basic and acidic residues; it reads LKEREKQVHSLEDKLKN. The 48-residue stretch at 2178-2225 folds into the GRIP domain; it reads LFGEPTEFEYLRKVMFEYMMGRETKTMAKVITTVLKFPDDQAQKILER.

Homodimer. Interacts with GTP-bound ARL1 and ARL3. Interacts with MACF1. Directly interacts with TBC1D23. Interacts with FAM91A1; this interaction may be mediated by TBC1D23. Ubiquitous. Highly expressed in oligodendrocyte precursors, particularly at a stage just prior to myelination.

It localises to the cytoplasm. The protein localises to the golgi apparatus membrane. The protein resides in the golgi apparatus. It is found in the trans-Golgi network membrane. Functionally, involved in vesicular trafficking at the Golgi apparatus level. May play a role in delivery of transport vesicles containing GPI-linked proteins from the trans-Golgi network through its interaction with MACF1. Involved in endosome-to-Golgi trafficking. The polypeptide is Golgin subfamily A member 4 (Golga4) (Mus musculus (Mouse)).